The following is a 377-amino-acid chain: Pseudouridylate synthase RPUSD4, mitochondrial (377 aa).

The transit peptide at 1 to 15 (MAAPRWSASGPWIRG) directs the protein to the mitochondrion. A coiled-coil region spans residues 36–62 (AASTAINAQRLAEKLRAQKREQDTKKE). The active site involves Asp153.

It belongs to the pseudouridine synthase RluA family. In terms of assembly, interacts with 16S mt-rRNA, mt-tRNA(Phe) and mt-tRNA(Met). Forms a regulatory protein-RNA complex, consisting of RCC1L, NGRN, RPUSD3, RPUSD4, TRUB2, FASTKD2 and 16S mt-rRNA.

It localises to the mitochondrion matrix. The protein localises to the nucleus. It is found in the cytoplasm. It carries out the reaction uridine in 5S rRNA = pseudouridine in 5S rRNA. The catalysed reaction is a uridine in tRNA = a pseudouridine in tRNA. It catalyses the reaction a uridine in mRNA = a pseudouridine in mRNA. Functionally, catalyzes uridine to pseudouridine isomerization (pseudouridylation) of different mitochondrial RNA substrates. Acts on position 1397 in 16S mitochondrial ribosomal RNA (16S mt-rRNA). This modification is required for the assembly of 16S mt-rRNA into a functional mitochondrial ribosome. As a component of a functional protein-RNA module, consisting of RCC1L, NGRN, RPUSD3, RPUSD4, TRUB2, FASTKD2 and 16S mt-rRNA, controls 16S mt-rRNA abundance and is required for intra-mitochondrial translation. Acts on position 39 in mitochondrial tRNA(Phe). Also catalyzes pseudouridylation of mRNAs in nucleus: acts as a regulator of pre-mRNA splicing by mediating pseudouridylation of pre-mRNAs at locations associated with alternatively spliced regions. Pseudouridylation of pre-mRNAs near splice sites directly regulates mRNA splicing and mRNA 3'-end processing. The chain is Pseudouridylate synthase RPUSD4, mitochondrial from Homo sapiens (Human).